Here is a 396-residue protein sequence, read N- to C-terminus: Elongation factor Tu (396 aa).

One can recognise a tr-type G domain in the interval 10–206 (KPHVNVGTIG…ALDTYIPTPE (197 aa)). A G1 region spans residues 19 to 26 (GHVDHGKT). 19-26 (GHVDHGKT) is a GTP binding site. Position 26 (Thr-26) interacts with Mg(2+). Positions 60-64 (GITIN) are G2. The segment at 81-84 (DCPG) is G3. GTP is bound by residues 81–85 (DCPGH) and 136–139 (NKCD). A G4 region spans residues 136–139 (NKCD). The tract at residues 174–176 (SAK) is G5.

The protein belongs to the TRAFAC class translation factor GTPase superfamily. Classic translation factor GTPase family. EF-Tu/EF-1A subfamily. In terms of assembly, monomer.

It localises to the cytoplasm. It carries out the reaction GTP + H2O = GDP + phosphate + H(+). Functionally, GTP hydrolase that promotes the GTP-dependent binding of aminoacyl-tRNA to the A-site of ribosomes during protein biosynthesis. This Polynucleobacter asymbioticus (strain DSM 18221 / CIP 109841 / QLW-P1DMWA-1) (Polynucleobacter necessarius subsp. asymbioticus) protein is Elongation factor Tu.